The following is a 304-amino-acid chain: Coenzyme PQQ synthesis protein B (304 aa).

The protein belongs to the PqqB family.

The protein operates within cofactor biosynthesis; pyrroloquinoline quinone biosynthesis. Functionally, may be involved in the transport of PQQ or its precursor to the periplasm. The sequence is that of Coenzyme PQQ synthesis protein B from Pseudomonas aeruginosa (strain LESB58).